The primary structure comprises 312 residues: Formate dehydrogenase iron-sulfur subunit (312 aa).

4Fe-4S ferredoxin-type domains follow at residues 35-65 (IAKL…SDIN), 97-129 (LEWL…QYAN), 130-159 (GIVD…MNPE), and 164-195 (YKCT…FGSK). [4Fe-4S] cluster is bound by residues C44, C47, C50, C54, C106, C109, C114, C118, C139, C142, C145, C149, C166, C169, C181, and C185.

Formate dehydrogenase is a membrane-bound complex, formed by subunits alpha, beta and gamma. Requires [4Fe-4S] cluster as cofactor.

Its subcellular location is the cell membrane. Functionally, allows to use formate as major electron donor during aerobic respiration. The beta chain is an electron transfer unit containing 4 cysteine clusters involved in the formation of iron-sulfur centers. Electrons are transferred from the gamma chain to the molybdenum cofactor of the alpha subunit. This chain is Formate dehydrogenase iron-sulfur subunit (fdxH), found in Haemophilus influenzae (strain ATCC 51907 / DSM 11121 / KW20 / Rd).